A 681-amino-acid polypeptide reads, in one-letter code: Methionine--tRNA ligase (681 aa).

The short motif at 18 to 28 (PYANGSIHLGH) is the 'HIGH' region element. Positions 149, 152, 162, and 165 each coordinate Zn(2+). The 'KMSKS' region signature appears at 334 to 338 (KMSKS). K337 contributes to the ATP binding site. Positions 580-681 (DFAKLDLRIV…NGAEPGQRVS (102 aa)) constitute a tRNA-binding domain.

The protein belongs to the class-I aminoacyl-tRNA synthetase family. MetG type 1 subfamily. In terms of assembly, homodimer. It depends on Zn(2+) as a cofactor.

Its subcellular location is the cytoplasm. The catalysed reaction is tRNA(Met) + L-methionine + ATP = L-methionyl-tRNA(Met) + AMP + diphosphate. Is required not only for elongation of protein synthesis but also for the initiation of all mRNA translation through initiator tRNA(fMet) aminoacylation. The polypeptide is Methionine--tRNA ligase (Chromohalobacter salexigens (strain ATCC BAA-138 / DSM 3043 / CIP 106854 / NCIMB 13768 / 1H11)).